The chain runs to 210 residues: Redox-sensing transcriptional repressor Rex (210 aa).

Residues 17 to 56 constitute a DNA-binding region (H-T-H motif); the sequence is KYHRYLGDLLDRDIQRISSKELSDIIGFTASQIRQDLNNF. Residue 91 to 96 coordinates NAD(+); the sequence is GAGNLG.

This sequence belongs to the transcriptional regulatory Rex family. As to quaternary structure, homodimer.

The protein resides in the cytoplasm. Functionally, modulates transcription in response to changes in cellular NADH/NAD(+) redox state. The sequence is that of Redox-sensing transcriptional repressor Rex from Clostridioides difficile (strain 630) (Peptoclostridium difficile).